A 338-amino-acid polypeptide reads, in one-letter code: Thiamine thiazole synthase (338 aa).

Residues 1–43 form a disordered region; the sequence is MSPVATESMYKPTTINQTAHQQAMDPLKSKQQSNATVNKPAFK. Residues 11–21 show a composition bias toward polar residues; the sequence is KPTTINQTAHQ. Substrate contacts are provided by residues alanine 91, 112-113, glycine 120, and cysteine 185; that span reads ES. Cysteine 221 carries the post-translational modification 2,3-didehydroalanine (Cys). Substrate contacts are provided by residues aspartate 223, histidine 238, methionine 290, and 300 to 302; that span reads RMG.

Belongs to the THI4 family. In terms of assembly, homooctamer. The cofactor is Fe cation. During the catalytic reaction, a sulfide is transferred from Cys-221 to a reaction intermediate, generating a dehydroalanine residue. Highly expressed in haustoria, and only in low amounts in intercellular hyphae. Found in the basal hyphae of the uredia, but not in the pedicels and only at very low levels in uredospores.

The protein resides in the cytoplasm. Its subcellular location is the nucleus. It carries out the reaction [ADP-thiazole synthase]-L-cysteine + glycine + NAD(+) = [ADP-thiazole synthase]-dehydroalanine + ADP-5-ethyl-4-methylthiazole-2-carboxylate + nicotinamide + 3 H2O + 2 H(+). In terms of biological role, involved in biosynthesis of the thiamine precursor thiazole. Catalyzes the conversion of NAD and glycine to adenosine diphosphate 5-(2-hydroxyethyl)-4-methylthiazole-2-carboxylic acid (ADT), an adenylated thiazole intermediate. The reaction includes an iron-dependent sulfide transfer from a conserved cysteine residue of the protein to a thiazole intermediate. The enzyme can only undergo a single turnover, which suggests it is a suicide enzyme. May have additional roles in adaptation to various stress conditions and in DNA damage tolerance. This is Thiamine thiazole synthase (THI2) from Uromyces fabae (Rust fungus).